The following is a 309-amino-acid chain: Zinc transporter ZIPB (309 aa).

Over 1–22 (MNQPSSLAADLRGAWHAQAQSH) the chain is Periplasmic. Residues 23–50 (PLITLGLAASAAGVVLLLVAGIVNALTG) traverse the membrane as a helical segment. Over 51–55 (ENRVH) the chain is Extracellular. Residues 56–81 (VGYAVLGGAAGFAATALGALMALGLR) form a helical membrane-spanning segment. The Periplasmic portion of the chain corresponds to 82–83 (AI). Residues 84–119 (SARTQDAMLGFAAGMMLAASAFSLILPGLDAAGTIV) form a helical membrane-spanning segment. Asp-89 is a Zn(2+) binding site. Residue Met-99 participates in Cd(2+) binding. Residues 120–121 (GP) are Extracellular-facing. A helical transmembrane segment spans residues 122-145 (GPAAAAVVALGLGLGVLLMLGLDY). Asp-144 lines the Zn(2+) pocket. Residue Asp-144 coordinates Cd(2+). Topologically, residues 146 to 165 (FTPHEHERTGHQGPEAARVN) are periplasmic. The helical transmembrane segment at 166–190 (RVWLFVLTIILHNLPEGMAIGVSFA) threads the bilayer. Residue His-177 participates in Zn(2+) binding. 3 residues coordinate Cd(2+): His-177, Asn-178, and Glu-181. Glu-181 lines the Zn(2+) pocket. The Extracellular segment spans residues 191-192 (TG). The chain crosses the membrane as a helical span at residues 193-222 (DLRIGLPLTSAIAIQDVPEGLAVALALRAV). Gln-207 provides a ligand contact to Zn(2+). Residues Gln-207, Asp-208, and Glu-211 each contribute to the Cd(2+) site. Residue Glu-211 coordinates Zn(2+). Residues 223–224 (GL) are Periplasmic-facing. The helical transmembrane segment at 225–251 (PIGRAVLVAVASGLMEPLGALVGVGIS) threads the bilayer. Residue Glu-240 coordinates Cd(2+). The Extracellular portion of the chain corresponds to 252–255 (SGFA). The chain crosses the membrane as a helical span at residues 256–275 (LAYPISMGLAAGAMIFVVSH). His-275, Glu-276, and His-286 together coordinate Zn(2+). His-275 is a Cd(2+) binding site. The Periplasmic segment spans residues 276 to 287 (EVIPETHRNGHE). A helical transmembrane segment spans residues 288 to 308 (TTATVGLMAGFALMMFLDTAL). Gly-309 is a topological domain (extracellular).

It belongs to the ZIP transporter (TC 2.A.5) family. In terms of assembly, homodimer. Also exists as a monomer.

The protein resides in the cell inner membrane. It catalyses the reaction Zn(2+)(in) = Zn(2+)(out). It carries out the reaction Cd(2+)(in) = Cd(2+)(out). Its function is as follows. Selective electrodiffusional channel that mediates the uptake of Zn(2+). Exploits in vivo zinc concentration gradients (maintained by cellular zinc homeostasis) to passively move zinc ions into the cytoplasm. ZIPB-mediated zinc flux is dependent upon pH, but independent of the proton motive force. Is also able to import Cd(2+), but is not permeable to Co(2+), Cu(2+), Fe(2+), Mn(2+) and Ni(2+). The protein is Zinc transporter ZIPB of Bordetella bronchiseptica (strain ATCC BAA-588 / NCTC 13252 / RB50) (Alcaligenes bronchisepticus).